A 606-amino-acid polypeptide reads, in one-letter code: Chaperone protein DnaK (606 aa).

Threonine 174 carries the phosphothreonine; by autocatalysis modification. Residues 576-606 (QAAGSANPGGSQGTSQGNVYEADYKVEDDNK) are disordered. Residues 597–606 (ADYKVEDDNK) are compositionally biased toward basic and acidic residues.

The protein belongs to the heat shock protein 70 family.

In terms of biological role, acts as a chaperone. In Caldanaerobacter subterraneus subsp. tengcongensis (strain DSM 15242 / JCM 11007 / NBRC 100824 / MB4) (Thermoanaerobacter tengcongensis), this protein is Chaperone protein DnaK.